Reading from the N-terminus, the 198-residue chain is Acireductone dioxygenase (198 aa).

Residues histidine 97, histidine 99, glutamate 103, and histidine 141 each contribute to the Fe(2+) site. Positions 97, 99, 103, and 141 each coordinate Ni(2+).

It belongs to the acireductone dioxygenase (ARD) family. Monomer. Fe(2+) is required as a cofactor. The cofactor is Ni(2+).

It catalyses the reaction 1,2-dihydroxy-5-(methylsulfanyl)pent-1-en-3-one + O2 = 3-(methylsulfanyl)propanoate + CO + formate + 2 H(+). The enzyme catalyses 1,2-dihydroxy-5-(methylsulfanyl)pent-1-en-3-one + O2 = 4-methylsulfanyl-2-oxobutanoate + formate + 2 H(+). It participates in amino-acid biosynthesis; L-methionine biosynthesis via salvage pathway; L-methionine from S-methyl-5-thio-alpha-D-ribose 1-phosphate: step 5/6. Functionally, catalyzes 2 different reactions between oxygen and the acireductone 1,2-dihydroxy-3-keto-5-methylthiopentene (DHK-MTPene) depending upon the metal bound in the active site. Fe-containing acireductone dioxygenase (Fe-ARD) produces formate and 2-keto-4-methylthiobutyrate (KMTB), the alpha-ketoacid precursor of methionine in the methionine recycle pathway. Ni-containing acireductone dioxygenase (Ni-ARD) produces methylthiopropionate, carbon monoxide and formate, and does not lie on the methionine recycle pathway. This is Acireductone dioxygenase from Synechococcus elongatus (strain ATCC 33912 / PCC 7942 / FACHB-805) (Anacystis nidulans R2).